The following is a 273-amino-acid chain: Large ribosomal subunit protein uL2 (273 aa).

2 disordered regions span residues 32 to 53 and 221 to 273; these read PLVEKNSKSGGRNNNGRITTRH and RGTA…RRSK. The segment covering 39–48 has biased composition (low complexity); the sequence is KSGGRNNNGR.

This sequence belongs to the universal ribosomal protein uL2 family. As to quaternary structure, part of the 50S ribosomal subunit. Forms a bridge to the 30S subunit in the 70S ribosome.

Its function is as follows. One of the primary rRNA binding proteins. Required for association of the 30S and 50S subunits to form the 70S ribosome, for tRNA binding and peptide bond formation. It has been suggested to have peptidyltransferase activity; this is somewhat controversial. Makes several contacts with the 16S rRNA in the 70S ribosome. The sequence is that of Large ribosomal subunit protein uL2 from Erwinia tasmaniensis (strain DSM 17950 / CFBP 7177 / CIP 109463 / NCPPB 4357 / Et1/99).